Consider the following 321-residue polypeptide: Torsin-2A (321 aa).

Residues Met1–Ala26 form the signal peptide. An ATP-binding site is contributed by Gly93–Ser100. Residue Asn149 is glycosylated (N-linked (GlcNAc...) asparagine).

It belongs to the ClpA/ClpB family. Torsin subfamily. Homohexamer. Interacts with TOR1AIP1. As to expression, isoform 1 is expressed ubiquitously, except in cardiac and endothelial tissues.

It is found in the endoplasmic reticulum lumen. The chain is Torsin-2A (TOR2A) from Homo sapiens (Human).